A 451-amino-acid polypeptide reads, in one-letter code: Tubulin beta-4 chain (451 aa).

8 residues coordinate GTP: glutamine 11, glutamate 69, serine 138, glycine 142, threonine 143, glycine 144, asparagine 204, and asparagine 226. Glutamate 69 provides a ligand contact to Mg(2+). The span at 417 to 427 (DLVSEYQQYQD) shows a compositional bias: polar residues. The interval 417 to 451 (DLVSEYQQYQDATAEEEGEYDEDDGGYGDEDDGMM) is disordered. The span at 429 to 451 (TAEEEGEYDEDDGGYGDEDDGMM) shows a compositional bias: acidic residues.

This sequence belongs to the tubulin family. Dimer of alpha and beta chains. A typical microtubule is a hollow water-filled tube with an outer diameter of 25 nm and an inner diameter of 15 nM. Alpha-beta heterodimers associate head-to-tail to form protofilaments running lengthwise along the microtubule wall with the beta-tubulin subunit facing the microtubule plus end conferring a structural polarity. Microtubules usually have 13 protofilaments but different protofilament numbers can be found in some organisms and specialized cells. It depends on Mg(2+) as a cofactor.

Its subcellular location is the cytoplasm. It is found in the cytoskeleton. Its function is as follows. Tubulin is the major constituent of microtubules, a cylinder consisting of laterally associated linear protofilaments composed of alpha- and beta-tubulin heterodimers. Microtubules grow by the addition of GTP-tubulin dimers to the microtubule end, where a stabilizing cap forms. Below the cap, tubulin dimers are in GDP-bound state, owing to GTPase activity of alpha-tubulin. This is Tubulin beta-4 chain (TUBB4) from Oomycete-like sp. (strain MacKay2000).